We begin with the raw amino-acid sequence, 930 residues long: uncharacterized protein (930 aa).

The short motif at 434–441 is the Nuclear localization signal element; that stretch reads IRRGISRK.

The protein localises to the nucleus. This is an uncharacterized protein from Chaetomium thermophilum (strain DSM 1495 / CBS 144.50 / IMI 039719) (Thermochaetoides thermophila).